The primary structure comprises 210 residues: Calcium-activated potassium channel subunit beta-4 (210 aa).

The Cytoplasmic portion of the chain corresponds to 1–19 (MAKLRVSYEYTEAEDKSIR). The helical transmembrane segment at 20-40 (LGLFLIVSGILSLFIFGFCWL) threads the bilayer. Residues 41–167 (SPALQDLQAT…DVLLQRTHDE (127 aa)) lie on the Extracellular side of the membrane. N53 and N90 each carry an N-linked (GlcNAc...) asparagine glycan. The chain crosses the membrane as a helical span at residues 168–188 (IVLLHCFLWPVVAFVVGVLIV). The Cytoplasmic segment spans residues 189–210 (VLTICAKSLAVKAEAMKKRKFS).

It belongs to the KCNMB (TC 8.A.14.1) family. KCNMB4 subfamily. As to quaternary structure, interacts with KCNMA1 tetramer. There are probably 4 molecules of KCMNB4 per KCNMA1 tetramer. Interacts with FMR1 (via N-terminus). In terms of processing, phosphorylated. Phosphorylation modulates its effect on KCNMA1 activation kinetics. N-glycosylated. A highly glycosylated form is promoted by KCNMA1. Glycosylation, which is not required for the interaction with KCNMA1 and subcellular location, increases protection against charybdotoxin.

The protein localises to the membrane. In terms of biological role, regulatory subunit of the calcium activated potassium KCNMA1 (maxiK) channel. Modulates the calcium sensitivity and gating kinetics of KCNMA1, thereby contributing to KCNMA1 channel diversity. Decreases the gating kinetics and calcium sensitivity of the KCNMA1 channel, but with fast deactivation kinetics. May decrease KCNMA1 channel openings at low calcium concentrations but increases channel openings at high calcium concentrations. Makes KCNMA1 channel resistant to 100 nM charybdotoxin (CTX) toxin concentrations. In Rattus norvegicus (Rat), this protein is Calcium-activated potassium channel subunit beta-4 (Kcnmb4).